The primary structure comprises 257 residues: Thioredoxin-dependent peroxide reductase, mitochondrial (257 aa).

A mitochondrion-targeting transit peptide spans Met-1–His-62. The region spanning Pro-64–Phe-222 is the Thioredoxin domain. Lys-84 carries the N6-succinyllysine modification. N6-acetyllysine; alternate is present on Lys-92. Lys-92 carries the N6-succinyllysine; alternate modification. The Cysteine sulfenic acid (-SOH) intermediate role is filled by Cys-109. Thr-147 carries the phosphothreonine modification.

The protein belongs to the peroxiredoxin family. AhpC/Prx1 subfamily. In terms of assembly, homodimer; disulfide-linked, upon oxidation. 6 homodimers assemble to form a ring-like dodecamer. Interacts with NEK6. Interacts with LRRK2. Interacts with MAP3K13. Interacts with RPS6KC1 (via PX domain). Post-translationally, phosphorylated by LRRK2; phosphorylation reduces perodixase activity. In terms of processing, the enzyme can be inactivated by further oxidation of the cysteine sulfenic acid (C(P)-SOH) to sulphinic acid (C(P)-SO2H) and sulphonic acid (C(P)-SO3H) instead of its condensation to a disulfide bond. S-palmitoylated. In terms of tissue distribution, housekeeping-type gene preferentially expressed in murine erythroleukemia (MEL) cells.

The protein resides in the mitochondrion. Its subcellular location is the cytoplasm. It is found in the early endosome. It carries out the reaction a hydroperoxide + [thioredoxin]-dithiol = an alcohol + [thioredoxin]-disulfide + H2O. In terms of biological role, thiol-specific peroxidase that catalyzes the reduction of hydrogen peroxide and organic hydroperoxides to water and alcohols, respectively. Plays a role in cell protection against oxidative stress by detoxifying peroxides. Acts synergistically with MAP3K13 to regulate the activation of NF-kappa-B in the cytosol. Required for the maintenance of physical strength. The sequence is that of Thioredoxin-dependent peroxide reductase, mitochondrial (Prdx3) from Mus musculus (Mouse).